Consider the following 186-residue polypeptide: Peptidyl-tRNA hydrolase (186 aa).

Tyr-14 is a tRNA binding site. The active-site Proton acceptor is the His-19. Phe-64, Asn-66, and Asn-112 together coordinate tRNA.

Belongs to the PTH family. Monomer.

It localises to the cytoplasm. It catalyses the reaction an N-acyl-L-alpha-aminoacyl-tRNA + H2O = an N-acyl-L-amino acid + a tRNA + H(+). In terms of biological role, hydrolyzes ribosome-free peptidyl-tRNAs (with 1 or more amino acids incorporated), which drop off the ribosome during protein synthesis, or as a result of ribosome stalling. Catalyzes the release of premature peptidyl moieties from peptidyl-tRNA molecules trapped in stalled 50S ribosomal subunits, and thus maintains levels of free tRNAs and 50S ribosomes. The chain is Peptidyl-tRNA hydrolase from Listeria monocytogenes serotype 4a (strain HCC23).